The following is a 93-amino-acid chain: Small ribosomal subunit protein uS19c (93 aa).

It belongs to the universal ribosomal protein uS19 family.

The protein localises to the plastid. It is found in the chloroplast. Protein S19 forms a complex with S13 that binds strongly to the 16S ribosomal RNA. This chain is Small ribosomal subunit protein uS19c, found in Ipomoea purpurea (Common morning glory).